The following is an 804-amino-acid chain: MYNHKTVEKKWQKYWAEHDTFKTGTDPKKKNYYALDMFPFPSGKGLHVGHPEGYTATDIVSRMKRAQGYNVLHPMGWDAFGLPTEQYALKTGEDPEKVTKENIANFKKQLNKLGFSYDWDREVTTSDPNYYKWTQWVFEQMYKKGLAYEAEVPVNWSPDLGTVVANEEIIDGKTERGGYPVYRRNMRQWMLKMTAYADRLLEDLDDLDWPEPVKEMQRNWIGRSEGAQVTFKVKDSDKTFDVFTTRPDTLFGVSYTVLAPESKLVQEITTPEQKEAVDAYIKKIESKSDLERTDLNKDKTGVFTGAYAVNPVNGKEVPIWISDYVLASYGTGAVMAVPAHDDRDYAFATKFGLPINRVIEGGNLEKEAFGGDGKHINSEFLDGLNNEEAKKRMIEWLEDHNVGEKKVNYKLRDWDFSRQRYWGEPIPVIHWEDGTTSLVPEDELPLRLPHATDIKPSGTPESPLANLTDWVNVVDENGRKGKRETNTMPNWAGSSWYYLRYIDPHNDKELADYDLLKKWLPVDLYIGGAEHAVRHLLYARFWHKVLYDLGVVPTKEPFQKLYNQGLILKNHEKMSKSKGNVVNPDEVIDEYGADSLRMYEMFMGPLDASIDWDDNGPASTKKFLDRVWRLFVNDLDLKAIPQEKIVDENDGELDKVYAETVKKVTEDFEALHFNTAISQMMVFMNAAQKAKTIPREYAEGFVQLLAPVAPHMMEEIWSVFGHDESIAYAKWPEYDPAKLVESTVEIMVQVNGKLRGKFKAAKDSDKDTLEKEALALDHVQKFLEGKDVKKVIVIPNKIVNIVAK.

The 'HIGH' region motif lies at 39 to 50 (PFPSGKGLHVGH). Positions 573 to 577 (KMSKS) match the 'KMSKS' region motif. An ATP-binding site is contributed by Lys576.

This sequence belongs to the class-I aminoacyl-tRNA synthetase family.

It localises to the cytoplasm. It carries out the reaction tRNA(Leu) + L-leucine + ATP = L-leucyl-tRNA(Leu) + AMP + diphosphate. The sequence is that of Leucine--tRNA ligase from Lactobacillus johnsonii (strain CNCM I-12250 / La1 / NCC 533).